Reading from the N-terminus, the 473-residue chain is Dol-P-Glc:Glc(2)Man(9)GlcNAc(2)-PP-Dol alpha-1,2-glucosyltransferase (473 aa).

Residues 1-6 (MAQLEG) lie on the Cytoplasmic side of the membrane. Residues 7 to 27 (YYFSAALSCTFLVSCLLFSAF) traverse the membrane as a helical segment. Over 28 to 64 (SRALREPYMDEIFHLPQAQRYCEGHFSLSQWDPMITT) the chain is Extracellular. The chain crosses the membrane as a helical span at residues 65-85 (LPGLYLVSIGVIKPAIWIFGW). Topologically, residues 86-97 (SEHVVCSIGMLR) are cytoplasmic. A helical membrane pass occupies residues 98-118 (FVNLLFSVGNFYLLYLLFCKV). The Extracellular portion of the chain corresponds to 119 to 130 (QPRNKAASSIQR). The next 2 membrane-spanning stretches (helical) occupy residues 131 to 151 (VLST…FLYY) and 152 to 172 (TEAG…YGNH). The Extracellular segment spans residues 173-175 (KTS). The helical transmembrane segment at 176-196 (AFLGFCGFMFRQTNIIWAVFC) threads the bilayer. At 197-249 (AGNVIAQKLTEAWKTELQKKEDRLPPIKGPFAEFRKILQFLLAYSMSFKNLSM) the chain is on the cytoplasmic side. A helical transmembrane segment spans residues 250 to 270 (LLLLTWPYILLGFLFCAFVVV). Topologically, residues 271–283 (NGGIVIGDRSSHE) are extracellular. Residues 284-304 (ACLHFPQLFYFFSFTLFFSFP) traverse the membrane as a helical segment. Residues 305 to 323 (HLLSPSKIKTFLSLVWKRR) are Cytoplasmic-facing. A helical membrane pass occupies residues 324-344 (ILFFVVTLVSVFLVWKFTYAH). Over 345-367 (KYLLADNRHYTFYVWKRVFQRYE) the chain is Extracellular. Residues 368–388 (TVKYLLVPAYIFAGWSIADSL) traverse the membrane as a helical segment. The Cytoplasmic portion of the chain corresponds to 389–392 (KSKS). A helical transmembrane segment spans residues 393-413 (IFWNLMFFICLFTVIVPQKLL). At 414 to 436 (EFRYFILPYVIYRLNIPLPPTSR) the chain is on the extracellular side. The chain crosses the membrane as a helical span at residues 437 to 457 (LICELSCYAVVNFITFFIFLN). Topologically, residues 458-473 (KTFQWPNSQDIQRFMW) are cytoplasmic.

This sequence belongs to the ALG10 glucosyltransferase family.

It is found in the endoplasmic reticulum membrane. It catalyses the reaction an alpha-D-Glc-(1-&gt;3)-alpha-D-Glc-(1-&gt;3)-alpha-D-Man-(1-&gt;2)-alpha-D-Man-(1-&gt;2)-alpha-D-Man-(1-&gt;3)-[alpha-D-Man-(1-&gt;2)-alpha-D-Man-(1-&gt;3)-[alpha-D-Man-(1-&gt;2)-alpha-D-Man-(1-&gt;6)]-alpha-D-Man-(1-&gt;6)]-beta-D-Man-(1-&gt;4)-beta-D-GlcNAc-(1-&gt;4)-alpha-D-GlcNAc-diphospho-di-trans,poly-cis-dolichol + a di-trans,poly-cis-dolichyl beta-D-glucosyl phosphate = a alpha-D-Glc-(1-&gt;2)-alpha-D-Glc-(1-&gt;3)-alpha-D-Glc-(1-&gt;3)-alpha-D-Man-(1-&gt;2)-alpha-D-Man-(1-&gt;2)-alpha-D-Man-(1-&gt;3)-[alpha-D-Man-(1-&gt;2)-alpha-D-Man-(1-&gt;3)-[alpha-D-Man-(1-&gt;2)-alpha-D-Man-(1-&gt;6)]-alpha-D-Man-(1-&gt;6)]-beta-D-Man-(1-&gt;4)-beta-D-GlcNAc-(1-&gt;4)-alpha-D-GlcNAc-diphospho-di-trans,poly-cis-dolichol + a di-trans,poly-cis-dolichyl phosphate + H(+). Its pathway is protein modification; protein glycosylation. Functionally, dol-P-Glc:Glc(2)Man(9)GlcNAc(2)-PP-Dol alpha-1,2-glucosyltransferase that operates in the biosynthetic pathway of dolichol-linked oligosaccharides, the glycan precursors employed in protein asparagine (N)-glycosylation. The assembly of dolichol-linked oligosaccharides begins on the cytosolic side of the endoplasmic reticulum membrane and finishes in its lumen. The sequential addition of sugars to dolichol pyrophosphate produces dolichol-linked oligosaccharides containing fourteen sugars, including two GlcNAcs, nine mannoses and three glucoses. Once assembled, the oligosaccharide is transferred from the lipid to nascent proteins by oligosaccharyltransferases. In the lumen of the endoplasmic reticulum, adds the third and last glucose residue from dolichyl phosphate glucose (Dol-P-Glc) onto the lipid-linked oligosaccharide intermediate Glc(2)Man(9)GlcNAc(2)-PP-Dol to produce Glc(3)Man(9)GlcNAc(2)-PP-Dol. The sequence is that of Dol-P-Glc:Glc(2)Man(9)GlcNAc(2)-PP-Dol alpha-1,2-glucosyltransferase from Homo sapiens (Human).